Reading from the N-terminus, the 189-residue chain is Ras-like protein rasG (189 aa).

Position 10–17 (10–17 (GGGGVGKS)) interacts with GTP. The Effector region motif lies at 32–40 (YDPTIEDSY). Residues 57-61 (DTAGQ) and 116-119 (NKCD) contribute to the GTP site. The interval 169 to 189 (KGDSKPEKGKKKRPLKACTLL) is disordered. Residue Cys186 is modified to Cysteine methyl ester. A lipid anchor (S-geranylgeranyl cysteine) is attached at Cys186. Positions 187 to 189 (TLL) are cleaved as a propeptide — removed in mature form.

It belongs to the small GTPase superfamily. Ras family. As to quaternary structure, interacts with ripA.

The protein localises to the cell membrane. It carries out the reaction GTP + H2O = GDP + phosphate + H(+). Its activity is regulated as follows. Alternates between an inactive form bound to GDP and an active form bound to GTP. Activated by a guanine nucleotide-exchange factor (GEF) and inactivated by a GTPase-activating protein (GAP). Ras proteins bind GDP/GTP and possess intrinsic GTPase activity. This Dictyostelium discoideum (Social amoeba) protein is Ras-like protein rasG (rasG).